We begin with the raw amino-acid sequence, 344 residues long: Exopolyphosphatase 1 (344 aa).

Positions 319-344 (VHTSVRAVGGQPADRNAANRSRGSKP) are disordered.

It belongs to the GppA/Ppx family. Homodimer.

The enzyme catalyses [phosphate](n) + H2O = [phosphate](n-1) + phosphate + H(+). Degradation of inorganic polyphosphates (polyP). Releases orthophosphate processively from the ends of the polyP chain. The chain is Exopolyphosphatase 1 from Mycobacterium bovis (strain ATCC BAA-935 / AF2122/97).